The following is a 362-amino-acid chain: Phospho-N-acetylmuramoyl-pentapeptide-transferase (362 aa).

Transmembrane regions (helical) follow at residues 21 to 41 (YITFRAGGACLTALVVSFLLG), 75 to 95 (TMGGFLILIALTVSTLLWADL), 100 to 120 (VWAVLMITIGYGALGFADDFL), 136 to 156 (LVVQAVLGLGAAVWITQLMPG), 170 to 190 (LMIPFGPLFPLVAMFVMMGAS), 201 to 221 (GLAIVPTIIAAGVFTLIAYLV), 225 to 245 (IFSHYLEINFVPGTGELAVFC), 247 to 267 (ALIGAGMGFLWFNAPPAAVFM), 290 to 310 (IVLAITGGLFVVETVSVIVQV), and 339 to 359 (TVVIRFWIVAMILALLGLATL).

This sequence belongs to the glycosyltransferase 4 family. MraY subfamily. The cofactor is Mg(2+).

It is found in the cell inner membrane. It catalyses the reaction UDP-N-acetyl-alpha-D-muramoyl-L-alanyl-gamma-D-glutamyl-meso-2,6-diaminopimeloyl-D-alanyl-D-alanine + di-trans,octa-cis-undecaprenyl phosphate = di-trans,octa-cis-undecaprenyl diphospho-N-acetyl-alpha-D-muramoyl-L-alanyl-D-glutamyl-meso-2,6-diaminopimeloyl-D-alanyl-D-alanine + UMP. It participates in cell wall biogenesis; peptidoglycan biosynthesis. Its function is as follows. Catalyzes the initial step of the lipid cycle reactions in the biosynthesis of the cell wall peptidoglycan: transfers peptidoglycan precursor phospho-MurNAc-pentapeptide from UDP-MurNAc-pentapeptide onto the lipid carrier undecaprenyl phosphate, yielding undecaprenyl-pyrophosphoryl-MurNAc-pentapeptide, known as lipid I. This is Phospho-N-acetylmuramoyl-pentapeptide-transferase from Acidiphilium cryptum (strain JF-5).